We begin with the raw amino-acid sequence, 198 residues long: Superoxide dismutase [Fe] (198 aa).

4 residues coordinate Fe cation: H27, H74, D158, and H162.

It belongs to the iron/manganese superoxide dismutase family. Homodimer. Requires Fe cation as cofactor.

Its subcellular location is the cytoplasm. It carries out the reaction 2 superoxide + 2 H(+) = H2O2 + O2. Destroys superoxide anion radicals which are normally produced within the cells and which are toxic to biological systems. This is Superoxide dismutase [Fe] (SODB) from Plasmodium falciparum (isolate 3D7).